The primary structure comprises 512 residues: Tyrosine-protein kinase Lyn (512 aa).

The interval 1-45 (MGCIKSKRKDNLNDDEVDSKTQPVRNTDRTIYVRDPTSNKQQRPV) is disordered. The N-myristoyl glycine moiety is linked to residue glycine 2. The S-palmitoyl cysteine moiety is linked to residue cysteine 3. Serine 19 carries the post-translational modification Phosphoserine. The SH3 domain occupies 63–123 (EQGDIVVALY…PSNYVAKVNT (61 aa)). One can recognise an SH2 domain in the interval 129-226 (WFFKDITRKD…GLCRRLEKAC (98 aa)). Tyrosine 193 carries the phosphotyrosine modification. At serine 228 the chain carries Phosphoserine. In terms of domain architecture, Protein kinase spans 247–501 (IKLVKKLGAG…YLQSVLDDFY (255 aa)). ATP is bound by residues 253-261 (LGAGQFGEV) and lysine 275. Phosphotyrosine is present on residues tyrosine 306 and tyrosine 316. The active-site Proton acceptor is aspartate 367. At tyrosine 397 the chain carries Phosphotyrosine; by autocatalysis. Phosphotyrosine is present on residues tyrosine 460 and tyrosine 473. Tyrosine 508 is modified (phosphotyrosine; by autocatalysis, CSK and MATK).

It belongs to the protein kinase superfamily. Tyr protein kinase family. SRC subfamily. Interacts with TEC. Interacts (via SH2 domain) with FLT3 (tyrosine phosphorylated). Interacts with LIME1 and with CD79A upon activation of the B-cell antigen receptor. Interacts with the B-cell receptor complex. Interacts with phosphorylated THEMIS2. Interacts with EPOR. Interacts with MS4A2/FCER1B. Interaction (via the SH2 and SH3 domains) with MUC1 is stimulated by IL7 and the subsequent phosphorylation increases the binding between MUC1 and CTNNB1/beta-catenin. Interacts with ADAM15. Interacts with NDFIP2 and more weakly with NDFIP1. Interacts with FASLG. Interacts with KIT. Interacts with HCLS1. Interacts with FCGR2B. Interacts with FCGR1A; the interaction may be indirect. Interacts with CD19, CD22, CD79A and CD79B. Interacts (via SH3 domain) with CBLC, PPP1R15A and PDE4A. Interacts with TGFB1I1. Interacts (via SH3 domain) with PIK3R1, the regulatory subunit of phosphatidylinositol 3-kinase; this interaction enhances phosphatidylinositol 3-kinase activity. Interacts with CSF2RB, the common subunit of the IL3, IL5 and CSF2 receptors. Interacts with PAG1; identified in a complex with PAG1 and STAT3. Interacts with ABL1. Interacts with PTPN6/SHP-1. Interacts (via SH3 domain) with SCIMP (via proline-rich region). This interaction facilitates the phosphorylation of SCIMP on 'Tyr-96', which enhances binding of SCIMP to TLR4, and consequently the phosphorylation of TLR4 in response to stimulation by lipopolysaccharide in macrophages. Interacts with LPXN (via LD motif 3) and the interaction is induced upon B-cell antigen receptor (BCR) activation. Interacts (via SH3-domain) with ANKRD54 (via ankyrin repeat region) in an activation-independent status of LYN. Forms a multiprotein complex with ANKRD54 and HCLS1. Interacts (via SH2 and SH3 domains) with UNC119; leading to LYN activation. Interacts with CD36. Interacts with LYN. Interacts with SKAP1 and FYB1; this interaction promotes the phosphorylation of CLNK. Interacts with BCAR1/CAS and NEDD9/HEF1. In terms of processing, ubiquitinated by CBL, leading to its degradation. Post-translationally, autophosphorylated. Phosphorylated on tyrosine residues in response to KIT signaling. Phosphorylation at Tyr-397 is required for optimal activity. Phosphorylation at Tyr-508 inhibits kinase activity. Phosphorylated at Tyr-508 by CSK. Dephosphorylated by PTPRC/CD45. Becomes rapidly phosphorylated upon activation of the B-cell receptor and the immunoglobulin receptor FCGR1A. Phosphorylated in response to ITGB1 in B-cells. Detected in bone marrow-derived monocytes and macrophages (at protein level). Expressed predominantly in B-lymphoid and myeloid cells.

The protein resides in the cell membrane. It is found in the nucleus. It localises to the cytoplasm. The protein localises to the perinuclear region. Its subcellular location is the golgi apparatus. The protein resides in the membrane. It carries out the reaction L-tyrosyl-[protein] + ATP = O-phospho-L-tyrosyl-[protein] + ADP + H(+). Subject to autoinhibition, mediated by intramolecular interactions between the SH2 domain and the C-terminal phosphotyrosine. Phosphorylation at Tyr-397 is required for optimal activity. Phosphorylated by CSK at Tyr-508; phosphorylation at Tyr-508 inhibits kinase activity. Kinase activity is modulated by dephosphorylation by PTPRC/CD45. Inhibited by dasatinib, PP2, and SU6656. Non-receptor tyrosine-protein kinase that transmits signals from cell surface receptors and plays an important role in the regulation of innate and adaptive immune responses, hematopoiesis, responses to growth factors and cytokines, integrin signaling, but also responses to DNA damage and genotoxic agents. Functions primarily as negative regulator, but can also function as activator, depending on the context. Required for the initiation of the B-cell response, but also for its down-regulation and termination. Plays an important role in the regulation of B-cell differentiation, proliferation, survival and apoptosis, and is important for immune self-tolerance. Acts downstream of several immune receptors, including the B-cell receptor, CD79A, CD79B, CD5, CD19, CD22, FCER1, FCGR2, FCGR1A, TLR2 and TLR4. Plays a role in the inflammatory response to bacterial lipopolysaccharide. Mediates the responses to cytokines and growth factors in hematopoietic progenitors, platelets, erythrocytes, and in mature myeloid cells, such as dendritic cells, neutrophils and eosinophils. Acts downstream of EPOR, KIT, MPL, the chemokine receptor CXCR4, as well as the receptors for IL3, IL5 and CSF2. Plays an important role in integrin signaling. Regulates cell proliferation, survival, differentiation, migration, adhesion, degranulation, and cytokine release. Involved in the regulation of endothelial activation, neutrophil adhesion and transendothelial migration. Down-regulates signaling pathways by phosphorylation of immunoreceptor tyrosine-based inhibitory motifs (ITIM), that then serve as binding sites for phosphatases, such as PTPN6/SHP-1, PTPN11/SHP-2 and INPP5D/SHIP-1, that modulate signaling by dephosphorylation of kinases and their substrates. Phosphorylates LIME1 in response to CD22 activation. Phosphorylates BTK, CBL, CD5, CD19, CD72, CD79A, CD79B, CSF2RB, DOK1, HCLS1, MS4A2/FCER1B, SYK and TEC. Phosphorylates PIRB at Tyr-794 and Tyr-824, which is required for PIRB interaction with PTPN6/SHP-1 and PTPN11/SHP-2. Promotes phosphorylation of SIRPA, PTPN6/SHP-1, PTPN11/SHP-2 and INPP5D/SHIP-1. Required for rapid phosphorylation of FER in response to FCER1 activation. Mediates KIT phosphorylation. Acts as an effector of EPOR (erythropoietin receptor) in controlling KIT expression and may play a role in erythroid differentiation during the switch between proliferation and maturation. Depending on the context, activates or inhibits several signaling cascades. Regulates phosphatidylinositol 3-kinase activity and AKT1 activation. Regulates activation of the MAP kinase signaling cascade, including activation of MAP2K1/MEK1, MAPK1/ERK2, MAPK3/ERK1, MAPK8/JNK1 and MAPK9/JNK2. Mediates activation of STAT5A and/or STAT5B. Phosphorylates LPXN on 'Tyr-72'. Kinase activity facilitates TLR4-TLR6 heterodimerization and signal initiation. Phosphorylates SCIMP on 'Tyr-96'; this enhances binding of SCIMP to TLR4, promoting the phosphorylation of TLR4, and a selective cytokine response to lipopolysaccharide in macrophages. Phosphorylates CLNK. Phosphorylates BCAR1/CAS and NEDD9/HEF1. The chain is Tyrosine-protein kinase Lyn (Lyn) from Mus musculus (Mouse).